The following is a 474-amino-acid chain: Eukaryotic translation initiation factor 3 subunit L (474 aa).

Positions 255–449 constitute a PCI domain; sequence DAIRMFSHIL…DLDYALQGDL (195 aa).

The protein belongs to the eIF-3 subunit L family. As to quaternary structure, component of the eukaryotic translation initiation factor 3 (eIF-3) complex.

Its subcellular location is the cytoplasm. Functionally, component of the eukaryotic translation initiation factor 3 (eIF-3) complex, which is involved in protein synthesis of a specialized repertoire of mRNAs and, together with other initiation factors, stimulates binding of mRNA and methionyl-tRNAi to the 40S ribosome. The eIF-3 complex specifically targets and initiates translation of a subset of mRNAs involved in cell proliferation. The polypeptide is Eukaryotic translation initiation factor 3 subunit L (Neurospora crassa (strain ATCC 24698 / 74-OR23-1A / CBS 708.71 / DSM 1257 / FGSC 987)).